The primary structure comprises 162 residues: tRNA-specific adenosine deaminase (162 aa).

A CMP/dCMP-type deaminase domain is found at 3 to 115 (DSDKYFMKCA…KNLQKYICCK (113 aa)). His54 provides a ligand contact to Zn(2+). Catalysis depends on Glu56, which acts as the Proton donor. Residues Cys84 and Cys87 each coordinate Zn(2+).

This sequence belongs to the cytidine and deoxycytidylate deaminase family. In terms of assembly, homodimer. Requires Zn(2+) as cofactor.

It catalyses the reaction adenosine(34) in tRNA + H2O + H(+) = inosine(34) in tRNA + NH4(+). Its function is as follows. Catalyzes the deamination of adenosine to inosine at the wobble position 34 of tRNA(Arg2). This is tRNA-specific adenosine deaminase from Buchnera aphidicola subsp. Baizongia pistaciae (strain Bp).